The chain runs to 373 residues: Probable pectin lyase C (373 aa).

Residues 1–17 form the signal peptide; the sequence is MKKYLLSLLAAVTYTTA. Cystine bridges form between Cys78/Cys95 and Cys87/Cys215. N-linked (GlcNAc...) asparagine glycans are attached at residues Asn140 and Asn229. Residue Arg245 is part of the active site. Cys315 and Cys323 form a disulfide bridge.

It belongs to the polysaccharide lyase 1 family.

It localises to the secreted. The enzyme catalyses Eliminative cleavage of (1-&gt;4)-alpha-D-galacturonan methyl ester to give oligosaccharides with 4-deoxy-6-O-methyl-alpha-D-galact-4-enuronosyl groups at their non-reducing ends.. Pectinolytic enzymes consist of four classes of enzymes: pectin lyase, polygalacturonase, pectin methylesterase and rhamnogalacturonase. Among pectinolytic enzymes, pectin lyase is the most important in depolymerization of pectin, since it cleaves internal glycosidic bonds of highly methylated pectins. The sequence is that of Probable pectin lyase C (pelC) from Emericella nidulans (strain FGSC A4 / ATCC 38163 / CBS 112.46 / NRRL 194 / M139) (Aspergillus nidulans).